The sequence spans 439 residues: Glutamyl-tRNA(Gln) amidotransferase subunit D (439 aa).

Positions 88-419 (GKVKIISTGG…EEVKRIMLTN (332 aa)) constitute an Asparaginase/glutaminase domain. Active-site residues include T98, T174, D175, and K253.

It belongs to the asparaginase 1 family. GatD subfamily. In terms of assembly, heterodimer of GatD and GatE.

It catalyses the reaction L-glutamyl-tRNA(Gln) + L-glutamine + ATP + H2O = L-glutaminyl-tRNA(Gln) + L-glutamate + ADP + phosphate + H(+). Allows the formation of correctly charged Gln-tRNA(Gln) through the transamidation of misacylated Glu-tRNA(Gln) in organisms which lack glutaminyl-tRNA synthetase. The reaction takes place in the presence of glutamine and ATP through an activated gamma-phospho-Glu-tRNA(Gln). The GatDE system is specific for glutamate and does not act on aspartate. The polypeptide is Glutamyl-tRNA(Gln) amidotransferase subunit D (Metallosphaera sedula (strain ATCC 51363 / DSM 5348 / JCM 9185 / NBRC 15509 / TH2)).